The sequence spans 535 residues: Berberine bridge enzyme-like 3 (535 aa).

The signal sequence occupies residues 1-19 (MKEALFGLYLVLLVSGLEA). A disulfide bridge connects residues Cys32 and Cys95. Asn52 is a glycosylation site (N-linked (GlcNAc...) asparagine). In terms of domain architecture, FAD-binding PCMH-type spans 73 to 247 (NNKNLLAIVV…LSWKINLVEV (175 aa)). The 6-(S-cysteinyl)-8alpha-(pros-histidyl)-FAD (His-Cys) cross-link spans 110 to 172 (HDNEGLSYVS…QTLAFPAGIC (63 aa)). 8 N-linked (GlcNAc...) asparagine glycosylation sites follow: Asn214, Asn257, Asn292, Asn321, Asn341, Asn415, Asn439, and Asn444.

The protein belongs to the oxygen-dependent FAD-linked oxidoreductase family. FAD serves as cofactor. The FAD cofactor is bound via a bicovalent 6-S-cysteinyl, 8alpha-N1-histidyl FAD linkage.

It localises to the endoplasmic reticulum. Its subcellular location is the cell membrane. It is found in the secreted. The protein localises to the cell wall. Its function is as follows. Flavin-dependent oxidoreductase involved in the biosynthetic pathway to 4-hydroxyindole-3-carbonyl nitrile (4-OH-ICN), a cyanogenic metabolite required for inducible pathogen defense. Converts indole cyanohydrin into indole-3-carbonyl nitrile (ICN). The protein is Berberine bridge enzyme-like 3 of Arabidopsis thaliana (Mouse-ear cress).